Here is a 130-residue protein sequence, read N- to C-terminus: Protein ApaG (130 aa).

Residues R3–R127 enclose the ApaG domain.

In Mesorhizobium japonicum (strain LMG 29417 / CECT 9101 / MAFF 303099) (Mesorhizobium loti (strain MAFF 303099)), this protein is Protein ApaG.